The chain runs to 232 residues: Phosphoglycolate phosphatase (232 aa).

Residue Asp-13 is the Nucleophile of the active site. Mg(2+)-binding residues include Asp-13, Asp-15, and Asp-175.

This sequence belongs to the HAD-like hydrolase superfamily. CbbY/CbbZ/Gph/YieH family. As to quaternary structure, monomer. Requires Mg(2+) as cofactor. Chloride is required as a cofactor.

The catalysed reaction is 2-phosphoglycolate + H2O = glycolate + phosphate. Its pathway is organic acid metabolism; glycolate biosynthesis; glycolate from 2-phosphoglycolate: step 1/1. Functionally, specifically catalyzes the dephosphorylation of 2-phosphoglycolate. Is involved in the dissimilation of the intracellular 2-phosphoglycolate formed during the DNA repair of 3'-phosphoglycolate ends, a major class of DNA lesions induced by oxidative stress. The sequence is that of Phosphoglycolate phosphatase from Yersinia pestis.